A 428-amino-acid chain; its full sequence is Adenylosuccinate synthetase (428 aa).

Residues 12–18 (GDEGKGK) and 40–42 (GHT) contribute to the GTP site. Aspartate 13 (proton acceptor) is an active-site residue. Aspartate 13 and glycine 40 together coordinate Mg(2+). IMP is bound by residues 13–16 (DEGK), 38–41 (NAGH), threonine 127, arginine 141, glutamine 222, threonine 237, and arginine 301. The active-site Proton donor is the histidine 41. Substrate is bound at residue 297–303 (TVTKRPR). Residues arginine 303, 329–331 (CLD), and 411–413 (SVG) each bind GTP.

The protein belongs to the adenylosuccinate synthetase family. Homodimer. The cofactor is Mg(2+).

Its subcellular location is the cytoplasm. It carries out the reaction IMP + L-aspartate + GTP = N(6)-(1,2-dicarboxyethyl)-AMP + GDP + phosphate + 2 H(+). It participates in purine metabolism; AMP biosynthesis via de novo pathway; AMP from IMP: step 1/2. Plays an important role in the de novo pathway of purine nucleotide biosynthesis. Catalyzes the first committed step in the biosynthesis of AMP from IMP. This is Adenylosuccinate synthetase from Levilactobacillus brevis (strain ATCC 367 / BCRC 12310 / CIP 105137 / JCM 1170 / LMG 11437 / NCIMB 947 / NCTC 947) (Lactobacillus brevis).